The following is a 429-amino-acid chain: Adenylosuccinate synthetase (429 aa).

Residues 12-18 (GDEGKGK) and 40-42 (GHT) each bind GTP. The active-site Proton acceptor is the Asp-13. Residues Asp-13 and Gly-40 each coordinate Mg(2+). IMP is bound by residues 13–16 (DEGK), 38–41 (NAGH), Thr-128, Arg-142, Gln-223, Thr-238, and Arg-302. His-41 acts as the Proton donor in catalysis. Substrate is bound at residue 298–304 (TTTGRAR). GTP-binding positions include Arg-304, 330–332 (SID), and 412–414 (SVG).

Belongs to the adenylosuccinate synthetase family. Homodimer. It depends on Mg(2+) as a cofactor.

The protein localises to the cytoplasm. The catalysed reaction is IMP + L-aspartate + GTP = N(6)-(1,2-dicarboxyethyl)-AMP + GDP + phosphate + 2 H(+). It functions in the pathway purine metabolism; AMP biosynthesis via de novo pathway; AMP from IMP: step 1/2. Functionally, plays an important role in the de novo pathway of purine nucleotide biosynthesis. Catalyzes the first committed step in the biosynthesis of AMP from IMP. This is Adenylosuccinate synthetase from Oceanobacillus iheyensis (strain DSM 14371 / CIP 107618 / JCM 11309 / KCTC 3954 / HTE831).